Consider the following 1482-residue polypeptide: MQRSPLEKASVISKLFFSWTRPILRKGYRQRLELSDIYQIPSADSADNLSEKLEREWDRELASKKNPKLINALRRCFFWRFTFYGIILYLGEVTKAVQPLLLGRIIASYDPDNKVERSIAIYLAVGLCLLFVVRTLLLHPAIFGLHHIGMQMRIAMFSLIYKKTLKLSSRVLDKISIGQLVSLLSNNLNKFDEGLALAHFVWIAPLQVTLLMGLLWDLLQASAFSGLGVLIILACFQAGFGRMMMKYRDQRAGKINERLVITSEMIENIQSVKAYCWEEALEKMIENFRQSELRLTRKAAYVRYFNSSAFFFSGFFVVFLSVLPYALIKGIILRKIFTTISFCIVLRMAVTRQFPWAVQTWYDSLGAINKIQDFLQKQEYKSLEYNLTTTDVVMETVTAFWEERFGELFEKAKQNNNNRKISNVDNSLFFSNFSLLGTPVLKDINFKIERGQLLAVAGSTGAGKTSLLMMIMGELEPSEGKIKHSGRISFCSQFSWIMPGTIKENIIFGVCYDEYRYRSVIKACQLVEDISKFAEKDNTVLGEGGITLSGGQRARISLARAVYKDADLYLLDSPFGYLDVLTEKEIFESCVCKLMANKTRILVTSKMEHLKKADKILILHEGSSYFYGTFSELQNLRPDFSSKLMGYDSFDQFSAERRNSIITETLRRFSLEGDAAHSWNETKKQSFKQTGEFGEKRKNSILNPINSLRRISITQKTPLPMNGIDEDSGETLERRLSLVPDCEQGEGILPRSNLINTGPTLQRGRRQSVLNLMTHSSGNQGQNIHRRTTAFTRKMSLAPQANLVEMDIYSRRLSQDSGLEISEEINEEDLKECFLDDVESIPAVTTWNTYLRYITVHKRLIFVLIWCFVVFLIEVAASLVLLCLLSKVSPEDKGNTTKSANDSSAVIITSTSSFYFLYIYVGVADTFLALGLFRGLPLVHTLITVSKILHHKMLHSVLQAPMSTLNTLKAGGILNRFSKDIAILDDLLPLTIFDFIQLLLIVIGAVAVVSILKPYIFLATVPVIVAFVLLRAYFLHTSQQLKQLESEARSPIFTHLVTSLKGLWTLRAFGRQPYFEALFHKALNLHTANWFLYLSTLRWFQMRIEMIFVIFFIAVTFISILTTGEGEGTVGIILTLAMNIMSTLQWAVNSSIDVDSLMRSVSRVFKFVDIPTEENKPTKSIKLPKDGQLSKVMIIENQHVKKDDIWPSGGQMTVKDLTAKYIDGGNAILENISFSISPGQRVGLLGRTGSGKSTLLSAFLRLLNTKGEIQIDGVSWDSITLQEWRKAFGVIPQKVFIFSGTFRKNLDPYGQWSDQEIWKVADEVGLRSVIEQFPGKLDFVLVDGGYVLSHGHKQLMCLARSVLSKAKILLLDEPSAHLDPITYQIIRRTLKQAFADCTVILCEHRIEAMLECQRFLVIEENKVRQYDSIQRLLSEKSLFRQAISPSDRVKLFPHQNSGKHKSRSKITALKEETEEEVQDTRL.

Over 1-77 (MQRSPLEKAS…KLINALRRCF (77 aa)) the chain is Cytoplasmic. The chain crosses the membrane as a helical span at residues 78–98 (FWRFTFYGIILYLGEVTKAVQ). The ABC transmembrane type-1 1 domain maps to 81–365 (FTFYGIILYL…WAVQTWYDSL (285 aa)). Topologically, residues 99–122 (PLLLGRIIASYDPDNKVERSIAIY) are extracellular. Residues 123 to 146 (LAVGLCLLFVVRTLLLHPAIFGLH) form a helical membrane-spanning segment. At 147–195 (HIGMQMRIAMFSLIYKKTLKLSSRVLDKISIGQLVSLLSNNLNKFDEGL) the chain is on the cytoplasmic side. Residues 196 to 216 (ALAHFVWIAPLQVTLLMGLLW) traverse the membrane as a helical segment. Residues 217 to 222 (DLLQAS) lie on the Extracellular side of the membrane. The helical transmembrane segment at 223–243 (AFSGLGVLIILACFQAGFGRM) threads the bilayer. At 244–298 (MMKYRDQRAGKINERLVITSEMIENIQSVKAYCWEEALEKMIENFRQSELRLTRK) the chain is on the cytoplasmic side. A helical membrane pass occupies residues 299 to 319 (AAYVRYFNSSAFFFSGFFVVF). Over 320 to 339 (LSVLPYALIKGIILRKIFTT) the chain is Extracellular. A helical transmembrane segment spans residues 340 to 358 (ISFCIVLRMAVTRQFPWAV). The Cytoplasmic segment spans residues 359–859 (QTWYDSLGAI…YLRYITVHKR (501 aa)). ATP contacts are provided by residues tryptophan 401, serine 434, 458 to 465 (GSTGAGKT), and glutamine 493. The 224-residue stretch at 423–646 (NVDNSLFFSN…RPDFSSKLMG (224 aa)) folds into the ABC transporter 1 domain. Cysteine 524 is lipidated: S-palmitoyl cysteine. Serine 549 and serine 660 each carry phosphoserine. The disordered R region stretch occupies residues 654–832 (SAERRNSIIT…EEINEEDLKE (179 aa)). Serine 670 carries the phosphoserine; by PKA modification. Serine 686 bears the Phosphoserine mark. Lysine 688 is covalently cross-linked (Glycyl lysine isopeptide (Lys-Gly) (interchain with G-Cter in ubiquitin)). 2 positions are modified to phosphoserine: serine 700 and serine 712. Threonine 717 carries the post-translational modification Phosphothreonine. 4 positions are modified to phosphoserine: serine 737, serine 768, serine 796, and serine 814. Residues 860–880 (LIFVLIWCFVVFLIEVAASLV) traverse the membrane as a helical segment. Residues 860-1156 (LIFVLIWCFV…AVNSSIDVDS (297 aa)) enclose the ABC transmembrane type-1 2 domain. The Extracellular segment spans residues 881 to 919 (LLCLLSKVSPEDKGNTTKSANDSSAVIITSTSSFYFLYI). Asparagine 895 and asparagine 901 each carry an N-linked (GlcNAc...) asparagine glycan. The discontinuously helical transmembrane segment at 920–940 (YVGVADTFLALGLFRGLPLVH) threads the bilayer. Residues 941-991 (TLITVSKILHHKMLHSVLQAPMSTLNTLKAGGILNRFSKDIAILDDLLPLT) lie on the Cytoplasmic side of the membrane. The helical transmembrane segment at 992–1012 (IFDFIQLLLIVIGAVAVVSIL) threads the bilayer. Over 1013-1014 (KP) the chain is Extracellular. Residues 1015-1035 (YIFLATVPVIVAFVLLRAYFL) form a helical membrane-spanning segment. The Cytoplasmic segment spans residues 1036 to 1096 (HTSQQLKQLE…TANWFLYLST (61 aa)). A helical membrane pass occupies residues 1097–1117 (LRWFQMRIEMIFVIFFIAVTF). The Extracellular portion of the chain corresponds to 1118 to 1131 (ISILTTGEGEGTVG). A helical transmembrane segment spans residues 1132–1152 (IILTLAMNIMSTLQWAVNSSI). Over 1153 to 1482 (DVDSLMRSVS…TEEEVQDTRL (330 aa)) the chain is Cytoplasmic. Residues 1212–1445 (MTVKDLTAKY…KSLFRQAISP (234 aa)) form the ABC transporter 2 domain. ATP is bound by residues tyrosine 1221 and 1246–1253 (GRTGSGKS). The interval 1388 to 1482 (RTLKQAFADC…TEEEVQDTRL (95 aa)) is interaction with GORASP2. Cysteine 1397 is lipidated: S-palmitoyl cysteine. Phosphoserine is present on serine 1446. A disordered region spans residues 1450–1482 (KLFPHQNSGKHKSRSKITALKEETEEEVQDTRL). The span at 1472–1482 (ETEEEVQDTRL) shows a compositional bias: acidic residues. Residues 1480–1482 (TRL) carry the PDZ-binding motif.

Belongs to the ABC transporter superfamily. ABCC family. CFTR transporter (TC 3.A.1.202) subfamily. As to quaternary structure, monomer; does not require oligomerization for channel activity. May form oligomers in the membrane. Interacts with SLC26A3, SLC26A6 and NHERF1. Interacts with SHANK2. Interacts with MYO6. Interacts (via C-terminus) with GOPC (via PDZ domain); this promotes CFTR internalization and thereby decreases channel activity. Interacts with SLC4A7 through NHERF1. Found in a complex with MYO5B and RAB11A. Interacts with ANO1. Interacts with SLC26A8. Interacts with AHCYL1; the interaction increases CFTR activity. Interacts with CSE1L. The core-glycosylated form interacts with GORASP2 (via PDZ GRASP-type 1 domain) in respone to ER stress. Interacts with MARCHF2; the interaction leads to CFTR ubiqtuitination and degradation. Interacts with ADGRG2. In terms of processing, N-glycosylated. Post-translationally, phosphorylated; cAMP treatment promotes phosphorylation and activates the channel. Dephosphorylation decreases the ATPase activity (in vitro). Phosphorylation at PKA sites activates the channel. Phosphorylation at PKC sites enhances the response to phosphorylation by PKA. Phosphorylated by AMPK; this inhibits channel activity. Ubiquitinated, leading to its degradation in the lysosome. Deubiquitination by USP10 in early endosomes enhances its endocytic recycling to the cell membrane. Ubiquitinated by RNF185 during ER stress. Ubiquitinated by MARCHF2.

It localises to the apical cell membrane. It is found in the early endosome membrane. Its subcellular location is the cell membrane. The protein localises to the recycling endosome membrane. The protein resides in the endoplasmic reticulum membrane. It localises to the nucleus. The catalysed reaction is ATP + H2O + closed Cl(-) channel = ADP + phosphate + open Cl(-) channel.. The enzyme catalyses chloride(in) = chloride(out). It carries out the reaction hydrogencarbonate(in) = hydrogencarbonate(out). It catalyses the reaction ATP + H2O = ADP + phosphate + H(+). Epithelial ion channel that plays an important role in the regulation of epithelial ion and water transport and fluid homeostasis. Mediates the transport of chloride ions across the cell membrane. Possesses an intrinsic ATPase activity and utilizes ATP to gate its channel; the passive flow of anions through the channel is gated by cycles of ATP binding and hydrolysis by the ATP-binding domains. The ion channel is also permeable to HCO(3)(-); selectivity depends on the extracellular chloride concentration. Exerts its function also by modulating the activity of other ion channels and transporters. Contributes to the regulation of the pH and the ion content of the epithelial fluid layer. Modulates the activity of the epithelial sodium channel (ENaC) complex, in part by regulating the cell surface expression of the ENaC complex. May regulate bicarbonate secretion and salvage in epithelial cells by regulating the transporter SLC4A7. Can inhibit the chloride channel activity of ANO1. Plays a role in the chloride and bicarbonate homeostasis during sperm epididymal maturation and capacitation. The sequence is that of Cystic fibrosis transmembrane conductance regulator from Dasypus novemcinctus (Nine-banded armadillo).